Reading from the N-terminus, the 166-residue chain is Small ribosomal subunit protein uS5 (166 aa).

The 64-residue stretch at 12 to 75 (YIEKLVQVNR…EAARRNMIQV (64 aa)) folds into the S5 DRBM domain.

It belongs to the universal ribosomal protein uS5 family. Part of the 30S ribosomal subunit. Contacts proteins S4 and S8.

With S4 and S12 plays an important role in translational accuracy. Functionally, located at the back of the 30S subunit body where it stabilizes the conformation of the head with respect to the body. This is Small ribosomal subunit protein uS5 from Ectopseudomonas mendocina (strain ymp) (Pseudomonas mendocina).